A 2771-amino-acid polypeptide reads, in one-letter code: MSKETKLSRRDSDNHDDEIENVPENLRASLLSLTSNDSLKNPKHECGSKIDRTPSKPRAKNPDPALPLRTPDKYRSAAAFSKNRFGWGDKCDSITNTTNAALLNTTPKTGRVVGRAYSETNSTQNTPTKSVSKPPGSCYRGKLDGTGTVRAGGYASLYKGLSSSSGQVSTVVNSVEVPHFSLKEDPSFWMDHNVQILIRVRPLNSMERSINGYNRCLKQESSQCVAWIGPPETRFQFDHVACETIDQETLFRVAGLPMVENCLSGYNSCIFAYGQTGSGKTYTMLGEVGDLEFKPSPNRGMMPRIFEFLFARIQAEEESRRDERLKYNCKCSFLEIYNEQITDLLEPSSTNLQLREDIKSGVYVENLTECEVQSVQDILGLITQGSLNRRVGATNMNRESSRSHSVFTCVIESRWEKDSTANMRFARLNLVDLAGSERQKTSGAEGDRLKEAASINKSLSTLGHVIMVLVDVANGKPRHIPYRDSRLTFLLQDSLGGNSKTMIIANASPSVSCAAETLNTLKFAQRAKLIQNNAVVNEDSNEDVLELRRQIRLLKEELSLLKRQNISRALSFGSATANFAESQVDSPSSVMHETGQQQAGNLLVYESGGCVRMSRKQLKSLEITLAGSLRREHVADASIKKLEAEIEHLNRLVRQREEDTRSTKMMLRFREDKIQRLESLLGNHISADSFLLEENNVLSEEIQLLQAKIDKNPELTRFALENIRLLDQLRRFQEFYEEGEREILLGEVSNLRNQLFQFLDENSDWQKHVDDGIEPQGASRMSKENCSLQEELKKTCYELEKCRSNLGSCLEENAKLSREINDLQAMVSDIRACTPDEHSSVNKQKALLGTQNFEPHETLACEQANYVEEIIKLQLDLDVQKIILDEERTLRGDTEAQAVRLKFDIEVLKDQLLLISKQQKNVYSELGETKSAVAALESQNIILIQEAVELRRIKENYFELLKKQELDIPAMKSKQCDEFKDNPAEDSEIDTKFKKMQASLEKAKRLNMLYKSDIASKACGDEEMDEVCKQAEAATAEVIVCLQNELEVLQKEVNDFQSKENVTEKQVEILETQMEELQDKLRDTTMDNEQLQEQLRGKDMELLIISNEMELLTSELEEILLNGNEGLTDACYQADLISGSLPDKRIWISEQVGGLIRTLSERELMIEDLESCLEDANKKRCDIESMLKSLKGAAIVMNEAHQREFEEKETDVLLLKSQLCTKTETILRLQEKLKMAERLIYEASDCATASLIIVNRYSEVTESHTFELKQKDFQVAESTGTILSLKQQVQDLEATCKEFRSKLLEEEKNASAMEQKLEEIEETSISAMKEKLSELKGGVSDLRSCITMCQEHDKYTEAENSLSSPAHCSEGQEPGRNVVVSSCIEKTPNNNHTESMRLSSKVSSERGKVIILLKQEMESALASLKEVQVEMANLKGEKEELKASEKRSLSNLNDLAAQICNLNTVMSNMEEQYEHKMEVTDHKLKTLEHEIAKMKIEADQEYVENLCILKKFEEAQGTIREADITVNELVIANEKMRFDLEKQKKRGISLVGEKKALVEKLQELESINVKENEKLAYLEKLFESSLMGIGNLVEELATVVRKLQDESSVALTGMAKDLSELKSWVSETNSARLFLEDIWSEIIMKDCAISVLHLCHMGILLETVTGINTENGLLQRGLCVSNSSIAGLRDNNLRLRRELEMFANLKGKLLTDIKNGFERISRNEEATNLLTTKLSSFDQKISGLQYQEDLMLQRSNSMGSQLDILLKEIDLSNGDLAETLLEQERHLNQKNDFFDTEVQLYLMDLCSKDVELLVLAQTAKEYSSCLAVVDRELLDHHVIVEDLKEKLIVSQVEGELKDQCLVDNKLETVSVKEELTEAQSKIKVLSSDLDRSVQKIAEIDEVNKDFGERVIFLESSITGLQQELAMKASELYSLEHSRSVTAEELDIKERDVQVYADIVSSLKKENVSLKNKFIHFGEDQFKALDVTRLSIAKCSHLTEDSKKLEKLTRDGMAISDKMLQLICENVDKASVFADTVQSLQIDVQELLSENLNLHDELLRKDDVLKGLSFDLSLLQESASNSRDKKDETKEIMVHVEALEKTLALKTFELEDAVSHAQMLEVRLQESKEITRNLEVDTEKARKCQEKLSAENKDIRAEAEDLLAEKCSLEEEMIQTKKVSESMEMELFNLRNALGQLNDTVAFTQRKLNDAIDERDNLQDEVLNLKEEFGKMKSEAKEMEARYIEAQQIAESRKTYADEREEEVKLLEGSVEELEYTINVLENKVNVVKDEAERQRLQREELEMELHTIRQQMESARNADEEMKRILDEKHMDLAQAKKHIEALERNTADQKTEITQLSEHISELNLHAEAQASEYMHKFKELEAMAEQVKPEIHVSQAIDSSLSKGSGKPRGSGSPFRCIGLGITQQMRSEKDEELAAARLRIEELETVVSTRQKEIFLLNSKLAKVDSMTHDINRVLLGVKQNVTNCASFLDSQQVLKIAEMLQHNSSDSRERDLEVSHLKQQLNEYNEKRQGWIEEIEGKQTELVTAQIKLEEHRQYQQLLKKENELLKKENFSHKIKVMELEGEVKKLSSHQNPEWRTRDQARIKEENNVLKLQLDELNLKLRRADVSVSRAKEELAFYRASSVKNPHSNFDKTHQLSTKLKETEEDRMQLAQELLSLCTSILKAAGVTGEDFTDINPEVAEEALEQLKTKLGLLESEVHHFRLKGKAKSRRSRNPERKMPSMPSPRRSWSQSPRSMSQVPFFSSLDR.

2 stretches are compositionally biased toward basic and acidic residues: residues 1–13 (MSKETKLSRRDSD) and 40–54 (KNPKHECGSKIDRTP). Disordered regions lie at residues 1 to 73 (MSKE…TPDK) and 117 to 139 (YSETNSTQNTPTKSVSKPPGSCY). Residues 118-131 (SETNSTQNTPTKSV) show a composition bias toward polar residues. In terms of domain architecture, Kinesin motor spans 193–530 (NVQILIRVRP…LKFAQRAKLI (338 aa)). An ATP-binding site is contributed by 274-281 (GQTGSGKT). 3 microtubules-binding regions span residues 400 to 404 (SSRSH), 431 to 437 (VDLAGSE), and 479 to 483 (HIPYR). Coiled-coil stretches lie at residues 1033–1110 (AATA…NEME), 1267–1331 (ELKQ…MKEK), 1410–1505 (IILL…YVEN), 2108–2390 (ELED…EQVK), and 2512–2677 (RERD…LAQE). A compositionally biased stretch (basic residues) spans 2727 to 2736 (LKGKAKSRRS). The disordered stretch occupies residues 2727–2771 (LKGKAKSRRSRNPERKMPSMPSPRRSWSQSPRSMSQVPFFSSLDR). Low complexity predominate over residues 2744 to 2762 (PSMPSPRRSWSQSPRSMSQ).

This sequence belongs to the TRAFAC class myosin-kinesin ATPase superfamily. Kinesin family. KIN-12 subfamily. In terms of tissue distribution, expressed in tissues enriched in dividing cells, such as root meristems, root primordia, and leaf primordia/young leaves.

Its subcellular location is the cytoplasm. The protein resides in the cytoskeleton. It is found in the phragmoplast. In terms of biological role, involved in the spatial control of cytokinesis by a proper phragmoplast guidance. The polypeptide is Kinesin-like protein KIN-12D (Arabidopsis thaliana (Mouse-ear cress)).